Reading from the N-terminus, the 229-residue chain is Leucyl/phenylalanyl-tRNA--protein transferase (229 aa).

It belongs to the L/F-transferase family.

Its subcellular location is the cytoplasm. It catalyses the reaction N-terminal L-lysyl-[protein] + L-leucyl-tRNA(Leu) = N-terminal L-leucyl-L-lysyl-[protein] + tRNA(Leu) + H(+). The enzyme catalyses N-terminal L-arginyl-[protein] + L-leucyl-tRNA(Leu) = N-terminal L-leucyl-L-arginyl-[protein] + tRNA(Leu) + H(+). The catalysed reaction is L-phenylalanyl-tRNA(Phe) + an N-terminal L-alpha-aminoacyl-[protein] = an N-terminal L-phenylalanyl-L-alpha-aminoacyl-[protein] + tRNA(Phe). In terms of biological role, functions in the N-end rule pathway of protein degradation where it conjugates Leu, Phe and, less efficiently, Met from aminoacyl-tRNAs to the N-termini of proteins containing an N-terminal arginine or lysine. This is Leucyl/phenylalanyl-tRNA--protein transferase from Pseudomonas syringae pv. tomato (strain ATCC BAA-871 / DC3000).